We begin with the raw amino-acid sequence, 214 residues long: Pyridoxine/pyridoxamine 5'-phosphate oxidase (214 aa).

Substrate is bound by residues 8 to 11 (RKSY) and Lys67. Residues 62-67 (RVVLLK), 77-78 (YT), Lys84, and Gln106 contribute to the FMN site. 3 residues coordinate substrate: Tyr124, Arg128, and Ser132. FMN is bound by residues 141–142 (QS) and Trp186. Position 192–194 (192–194 (RLH)) interacts with substrate. Arg196 lines the FMN pocket.

This sequence belongs to the pyridoxamine 5'-phosphate oxidase family. In terms of assembly, homodimer. Requires FMN as cofactor.

It carries out the reaction pyridoxamine 5'-phosphate + O2 + H2O = pyridoxal 5'-phosphate + H2O2 + NH4(+). It catalyses the reaction pyridoxine 5'-phosphate + O2 = pyridoxal 5'-phosphate + H2O2. The protein operates within cofactor metabolism; pyridoxal 5'-phosphate salvage; pyridoxal 5'-phosphate from pyridoxamine 5'-phosphate: step 1/1. It participates in cofactor metabolism; pyridoxal 5'-phosphate salvage; pyridoxal 5'-phosphate from pyridoxine 5'-phosphate: step 1/1. Functionally, catalyzes the oxidation of either pyridoxine 5'-phosphate (PNP) or pyridoxamine 5'-phosphate (PMP) into pyridoxal 5'-phosphate (PLP). The sequence is that of Pyridoxine/pyridoxamine 5'-phosphate oxidase from Flavobacterium psychrophilum (strain ATCC 49511 / DSM 21280 / CIP 103535 / JIP02/86).